Here is a 28-residue protein sequence, read N- to C-terminus: uncharacterized protein (28 aa).

Its subcellular location is the cell inner membrane. This is an uncharacterized protein from Escherichia coli (strain K12).